We begin with the raw amino-acid sequence, 535 residues long: MRLRNGTVATALAFITSFLTLSWYTTWQNGKEKLIAYQREFLALKERLRIAEHRISQRSSELNTIVQQFKRVGAETNGSKDALNKFSDNTLKLLKELTSKKSLQVPSIYYHLPHLLKNEGSLRPAVQIGNGRTGVSIVMGIPTVKREVKSYLIETLHSLIDNLYPEEKLDCVIVVFIGETDTDYVHGVVANLEKEFSKEISSGLVEVISPPESYYPDLTNLKETFGDSKERVRWRTKQNLDYCFLMMYAQEKGIYYIQLEDDIIVKQNYFNTIKNFALQLSSEEWMILEFSQLGFIGKMFQAPDLTLIVEFIFMFYKEKPIDWLLDHILWVKVCNPEKDAKHCDRQKANLRIRFRPSLFQHVGLHSSLSGKIQKLTDKDYMKPLLLKIHVNPPAEVSTSLKVYQGHTLEKTYMGEDFFWAITPIAGDYILFKFDKPVNVESYLFHSGNQEHPGDILLNTTVEVLPFKSEGLEISKETKDKRLEDGYFRIGKFENGVAEGMVDPSLNPISAFRLSVIQNSAVWAILNEIHIKKATK.

Residues 1–4 lie on the Cytoplasmic side of the membrane; that stretch reads MRLR. Residues 5–27 traverse the membrane as a helical; Signal-anchor for type II membrane protein segment; that stretch reads NGTVATALAFITSFLTLSWYTTW. A coiled-coil region spans residues 28-63; that stretch reads QNGKEKLIAYQREFLALKERLRIAEHRISQRSSELN. Topologically, residues 28-535 are lumenal; sequence QNGKEKLIAY…NEIHIKKATK (508 aa). Residues Asn-77 and Asn-458 are each glycosylated (N-linked (GlcNAc...) asparagine). Residue Ser-474 is modified to Phosphoserine.

Belongs to the glycosyltransferase 54 family. A divalent metal cation serves as cofactor. In terms of processing, N-glycosylated.

The protein resides in the golgi apparatus membrane. Its subcellular location is the secreted. It carries out the reaction N(4)-{beta-D-GlcNAc-(1-&gt;2)-alpha-D-Man-(1-&gt;3)-[beta-D-GlcNAc-(1-&gt;2)-alpha-D-Man-(1-&gt;6)]-beta-D-Man-(1-&gt;4)-beta-D-GlcNAc-(1-&gt;4)-beta-D-GlcNAc}-L-asparaginyl-[protein] + UDP-N-acetyl-alpha-D-glucosamine = N(4)-{beta-D-GlcNAc-(1-&gt;2)-[beta-D-GlcNAc-(1-&gt;4)]-alpha-D-Man-(1-&gt;3)-[beta-D-GlcNAc-(1-&gt;2)-alpha-D-Man-(1-&gt;6)]-beta-D-Man-(1-&gt;4)-beta-D-GlcNAc-(1-&gt;4)-beta-D-GlcNAc}-L-asparaginyl-[protein] + UDP + H(+). It catalyses the reaction an N(4)-{beta-D-GlcNAc-(1-&gt;2)-alpha-D-Man-(1-&gt;3)-[alpha-D-Man-(1-&gt;6)]-beta-D-Man-(1-&gt;4)-beta-D-GlcNAc-(1-&gt;4)-beta-D-GlcNAc}-L-asparaginyl-[protein] + UDP-N-acetyl-alpha-D-glucosamine = an N(4)-{beta-D-GlcNAc-(1-&gt;2)-[beta-D-GlcNAc-(1-&gt;4)]-alpha-D-Man-(1-&gt;3)-[alpha-D-Man-(1-&gt;6)]-beta-D-Man-(1-&gt;4)-beta-D-GlcNAc-(1-&gt;4)-beta-D-GlcNAc}-L-asparaginyl-[protein] + UDP + H(+). The enzyme catalyses an N(4)-{beta-D-GlcNAc-(1-&gt;2)-alpha-D-Man-(1-&gt;3)-[beta-D-GlcNAc-(1-&gt;2)-[beta-D-GlcNAc-(1-&gt;6)]-alpha-D-Man-(1-&gt;6)]-beta-D-Man-(1-&gt;4)-beta-D-GlcNAc-(1-&gt;4)-beta-D-GlcNAc}-L-asparaginyl-[protein] + UDP-N-acetyl-alpha-D-glucosamine = an N(4)-{beta-D-GlcNAc-(1-&gt;2)-[beta-D-GlcNAc-(1-&gt;4)]-alpha-D-Man-(1-&gt;3)-[beta-D-GlcNAc-(1-&gt;2)-[beta-D-GlcNAc-(1-&gt;6)]-alpha-D-Man-(1-&gt;6)]-beta-D-Man-(1-&gt;4)-beta-D-GlcNAc-(1-&gt;4)-beta-D-GlcNAc}-L-asparaginyl-[protein] + UDP + H(+). The catalysed reaction is an N(4)-{beta-D-GlcNAc-(1-&gt;2)-alpha-D-Man-(1-&gt;3)-[beta-D-GlcNAc-(1-&gt;2)-alpha-D-Man-(1-&gt;6)]-beta-D-Man-(1-&gt;4)-beta-D-GlcNAc-(1-&gt;4)-[alpha-L-Fuc-(1-&gt;6)]-beta-D-GlcNAc}-L-asparaginyl-[protein] + UDP-N-acetyl-alpha-D-glucosamine = N(4)-{beta-D-GlcNAc-(1-&gt;2)-[beta-D-GlcNAc-(1-&gt;4)]-alpha-D-Man-(1-&gt;3)-[beta-D-GlcNAc-(1-&gt;2)-alpha-D-Man-(1-&gt;6)]-beta-D-Man-(1-&gt;4)-beta-D-GlcNAc-(1-&gt;4)-[alpha-L-Fuc-(1-&gt;6)]-beta-D-GlcNAc}-asparaginyl-[protein] + UDP + H(+). It carries out the reaction an N(4)-{beta-D-GlcNAc-(1-&gt;2)-alpha-D-Man-(1-&gt;3)-[beta-D-Gal-(1-&gt;4)-beta-D-GlcNAc-(1-&gt;2)-alpha-D-Man-(1-&gt;6)]-beta-D-Man-(1-&gt;4)-beta-D-GlcNAc-(1-&gt;4)-beta-D-GlcNAc}-L-asparaginyl-[protein] + UDP-N-acetyl-alpha-D-glucosamine = an N(4)-{beta-D-GlcNAc-(1-&gt;2)-[beta-D-GlcNAc-(1-&gt;4)]-alpha-D-Man-(1-&gt;3)-[beta-D-Gal-(1-&gt;4)-beta-D-GlcNAc-(1-&gt;2)-alpha-D-Man-(1-&gt;6)]-beta-D-Man-(1-&gt;4)-beta-D-GlcNAc-(1-&gt;4)-beta-D-GlcNAc}-L-asparaginyl-[protein] + UDP + H(+). It catalyses the reaction N(4)-{beta-D-GlcNAc-(1-&gt;2)-alpha-D-Man-(1-&gt;3)-[alpha-D-Man-(1-&gt;3)-{alpha-D-Man-(1-&gt;6)}-alpha-D-Man-(1-&gt;6)]-beta-D-Man-(1-&gt;4)-beta-D-GlcNAc-(1-&gt;4)-beta-D-GlcNAc}-asparaginyl-[protein] + UDP-N-acetyl-alpha-D-glucosamine = N(4)-{beta-D-GlcNAc-(1-&gt;2)-[beta-D-GlcNAc-(1-&gt;4)]-alpha-D-Man-(1-&gt;3)-[alpha-D-Man-(1-&gt;3)-{alpha-D-Man-(1-&gt;6)}-alpha-D-Man-(1-&gt;6)]-beta-D-Man-(1-&gt;4)-beta-D-GlcNAc-(1-&gt;4)-beta-D-GlcNAc}-asparaginyl-[protein] + UDP + H(+). The enzyme catalyses N(4)-{beta-D-GlcNAc-(1-&gt;2)-alpha-D-Man-(1-&gt;3)-beta-D-Man-(1-&gt;4)-beta-D-GlcNAc-(1-&gt;4)-beta-D-GlcNAc}-asparaginyl-[protein] + UDP-N-acetyl-alpha-D-glucosamine = N(4)-{beta-D-GlcNAc-(1-&gt;2)-[beta-D-GlcNAc-(1-&gt;4)]-alpha-D-Man-(1-&gt;3)-beta-D-Man-(1-&gt;4)-beta-D-GlcNAc-(1-&gt;4)-beta-D-GlcNAc}-asparaginyl-[protein] + UDP + H(+). It participates in protein modification; protein glycosylation. With respect to regulation, inhibited by UDP. In terms of biological role, glycosyltransferase that catalyze the transfer of GlcNAc from UDP-GlcNAc to the GlcNAcbeta1-2Manalpha1-3 arm of the core structure of N-linked glycans through a beta1-4 linkage and participates in the production of tri- and tetra-antennary N-linked sugar chains. Involved in glucose transport by mediating SLC2A2/GLUT2 glycosylation, thereby controlling cell-surface expression of SLC2A2 in pancreatic beta cells. The sequence is that of Alpha-1,3-mannosyl-glycoprotein 4-beta-N-acetylglucosaminyltransferase A from Macaca fascicularis (Crab-eating macaque).